The following is a 74-amino-acid chain: Exodeoxyribonuclease 7 small subunit (74 aa).

The protein belongs to the XseB family. Heterooligomer composed of large and small subunits.

It localises to the cytoplasm. The enzyme catalyses Exonucleolytic cleavage in either 5'- to 3'- or 3'- to 5'-direction to yield nucleoside 5'-phosphates.. Bidirectionally degrades single-stranded DNA into large acid-insoluble oligonucleotides, which are then degraded further into small acid-soluble oligonucleotides. The polypeptide is Exodeoxyribonuclease 7 small subunit (Glaesserella parasuis serovar 5 (strain SH0165) (Haemophilus parasuis)).